An 876-amino-acid chain; its full sequence is MSKSTAEIRQAFLDFFHSKGHQVVASSSLVPHNDPTLLFTNAGMNQFKDVFLGLDKRNYSRATTSQRCVRAGGKHNDLENVGYTARHHTFFEMLGNFSFGDYFKHDAIQFAWELLTSEKWFALPKERLWVTVYESDDEAYEIWEKEVGIPRERIIRIGDNKGAPYASDNFWQMGDTGPCGPCTEIFYDHGDHIWGGPPGSPEEDGDRYIEIWNIVFMQFNRQADGTMEPLPKPSVDTGMGLERIAAVLQHVNSNYDIDLFRTLIQAVAKVTGATDLSNKSLRVIADHIRSCAFLIADGVMPSNENRGYVLRRIIRRAVRHGNMLGAKETFFYKLVGPLIDVMGSAGEDLKRQQAQVEQVLKTEEEQFARTLERGLALLDEELAKLSGDTLDGETAFRLYDTYGFPVDLTADVCRERNIKVDEAGFEAAMEEQRRRAREASGFGADYNAMIRVDSASEFKGYDHLELNGKVTALFVDGKAVDAINAGQEAVVVLDQTPFYAESGGQVGDKGELKGANFSFAVEDTQKYGQAIGHIGKLAAGSLKVGDAVQADVDEARRARIRLNHSATHLMHAALRQVLGTHVSQKGSLVNDKVLRFDFSHNEAMKPEEIRAVEDLVNAQIRRNLPIETNIMDLEAAKAKGAMALFGEKYDERVRVLSMGDFSTELCGGTHASRTGDIGLFRIISESGTAAGVRRIEAVTGEGAIATVHADSDRLSEVAHLLKGDSNNLADKVRSVLERTRQLEKELQQLKEQAAAQESANLSSKAIDVNGVKLLVSELSGVEPKMLRTMVDDLKNQLGSTIIVLATVAEGKVSLIAGVSKDVTDRVKAGELIGMVAQQVGGKGGGRPDMAQAGGTDAAALPAALASVKGWVSAKLQ.

K74 carries the post-translational modification N6-acetyllysine. H564, H568, C666, and H670 together coordinate Zn(2+).

This sequence belongs to the class-II aminoacyl-tRNA synthetase family. As to quaternary structure, homotetramer. The cofactor is Zn(2+).

Its subcellular location is the cytoplasm. It carries out the reaction tRNA(Ala) + L-alanine + ATP = L-alanyl-tRNA(Ala) + AMP + diphosphate. Functionally, catalyzes the attachment of alanine to tRNA(Ala) in a two-step reaction: alanine is first activated by ATP to form Ala-AMP and then transferred to the acceptor end of tRNA(Ala). Also edits incorrectly charged Ser-tRNA(Ala) and Gly-tRNA(Ala) via its editing domain. The sequence is that of Alanine--tRNA ligase from Escherichia coli O9:H4 (strain HS).